The following is a 306-amino-acid chain: uncharacterized protein (306 aa).

N208 carries an N-linked (GlcNAc...) asparagine glycan. Transmembrane regions (helical) follow at residues 218 to 238 (VFEI…VLFY) and 284 to 304 (VMLV…KITK).

The protein resides in the membrane. This is an uncharacterized protein from Encephalitozoon cuniculi (strain GB-M1) (Microsporidian parasite).